The sequence spans 322 residues: tRNA (guanine-N(7)-)-methyltransferase (322 aa).

S-adenosyl-L-methionine-binding residues include glutamate 29, glutamate 55, and aspartate 105. Aspartate 105 is an active-site residue. The substrate site is built by lysine 109 and aspartate 141.

The protein belongs to the class I-like SAM-binding methyltransferase superfamily. TrmB family.

It catalyses the reaction guanosine(46) in tRNA + S-adenosyl-L-methionine = N(7)-methylguanosine(46) in tRNA + S-adenosyl-L-homocysteine. It participates in tRNA modification; N(7)-methylguanine-tRNA biosynthesis. Catalyzes the formation of N(7)-methylguanine at position 46 (m7G46) in tRNA. The protein is tRNA (guanine-N(7)-)-methyltransferase of Deinococcus radiodurans (strain ATCC 13939 / DSM 20539 / JCM 16871 / CCUG 27074 / LMG 4051 / NBRC 15346 / NCIMB 9279 / VKM B-1422 / R1).